The sequence spans 419 residues: Zinc finger protein Pegasus (419 aa).

Residue lysine 5 forms a Glycyl lysine isopeptide (Lys-Gly) (interchain with G-Cter in SUMO2) linkage. A disordered region spans residues 36 to 55 (DKEAETLQGAGTDGDQNGLD). 3 consecutive C2H2-type zinc fingers follow at residues 82–104 (LKCR…IRIH), 110–132 (HRCH…MRSH), and 138–161 (YKCE…RRKH). Residue lysine 185 forms a Glycyl lysine isopeptide (Lys-Gly) (interchain with G-Cter in SUMO2) linkage. A compositionally biased stretch (polar residues) spans 262-273 (LSSLPPENQNPA). Disordered regions lie at residues 262–284 (LSSL…PDEK) and 297–356 (VSAV…PTLP). The span at 297-311 (VSAVSASIPQSSSPT) shows a compositional bias: low complexity. The span at 332-349 (SEPSAHTSTPSIGNSQPS) shows a compositional bias: polar residues. 2 consecutive C2H2-type zinc fingers follow at residues 364-386 (HHCQ…MGCH) and 392-416 (FQCN…RGQH).

The protein belongs to the Ikaros C2H2-type zinc-finger protein family. Self-associates. Interacts with other family members; IKZF1, IKZF2, IKZF3 and IKZF4.

The protein resides in the nucleus. Transcriptional repressor that binds the core 5'GNNTGTNG-3' DNA consensus sequence. Involved in megakaryocyte differentiation. This chain is Zinc finger protein Pegasus (Ikzf5), found in Mus musculus (Mouse).